Reading from the N-terminus, the 321-residue chain is MIFLTLEHILTHISFSVVSIVIIIHFLTLLVNEFVGLYDSSEKGMLTTFFCLTGLLITRWIYSGHLPISDLYESLIFLSWIFSIIHMVPYFKKHKNYLSTITAPSTFFTQGFATWGLLTDMHQSKILVPALQSQWLIMHVSMMVSGYAALLCGSLLSAALLVITFRKVIRIVGKNNNLLNDSFPVDEIQYMMEKKSIFKNTFFPSSRNYYRFQLIQQLDHWGFRILSIGFLFLTIGILSGAVWANEAWGSYWNWDPKETWAFITWTIFAIYFHTRTNKNLEGLNSAIVASIGFLIIWICYFGVNLLGIGLHSYGSFTLISN.

8 consecutive transmembrane segments (helical) span residues 17-37, 48-68, 71-91, 98-118, 143-163, 225-245, 259-273, and 286-306; these read VVSIVIIIHFLTLLVNEFVGL, TFFCLTGLLITRWIYSGHLPI, LYESLIFLSWIFSIIHMVPYF, LSTITAPSTFFTQGFATWGLL, MVSGYAALLCGSLLSAALLVI, ILSIGFLFLTIGILSGAVWAN, TWAFITWTIFAIYFH, and AIVASIGFLIIWICYFGVNLL.

Belongs to the CcmF/CycK/Ccl1/NrfE/CcsA family. May interact with Ccs1.

The protein localises to the plastid. It localises to the chloroplast thylakoid membrane. Functionally, required during biogenesis of c-type cytochromes (cytochrome c6 and cytochrome f) at the step of heme attachment. This chain is Cytochrome c biogenesis protein CcsA, found in Populus alba (White poplar).